We begin with the raw amino-acid sequence, 164 residues long: MADS-box transcription factor 51 (164 aa).

The MADS-box domain occupies 2-62 (ARRGRVQLRR…GKLYEYSSSS (61 aa)). Positions 133–164 (TKSKKMLAKQNGEGSRSRANSSGSRGQEEGSA) are disordered.

Widely expressed.

It localises to the nucleus. Probable transcription factor involved in the regulation of flowering time under short day (SD) conditions. Functions as a promoter of flowering under SD conditions, upstream of EHD1, HD3A and MADS14, but downstream of GIGANTEA (GI). May transmit a SD promotion signal from GI to EHD1. Functions independently of MADS50 to control flowering time. This is MADS-box transcription factor 51 from Oryza sativa subsp. japonica (Rice).